Here is a 197-residue protein sequence, read N- to C-terminus: Nucleoid occlusion factor SlmA (197 aa).

The region spanning 7–67 (ISRREHILQC…GLIEFIEDSL (61 aa)) is the HTH tetR-type domain. A DNA-binding region (H-T-H motif) is located at residues 30 to 49 (TTAKLAAEVGVSEAALYRHF).

It belongs to the nucleoid occlusion factor SlmA family. In terms of assembly, homodimer. Interacts with FtsZ.

It localises to the cytoplasm. The protein resides in the nucleoid. Required for nucleoid occlusion (NO) phenomenon, which prevents Z-ring formation and cell division over the nucleoid. Acts as a DNA-associated cell division inhibitor that binds simultaneously chromosomal DNA and FtsZ, and disrupts the assembly of FtsZ polymers. SlmA-DNA-binding sequences (SBS) are dispersed on non-Ter regions of the chromosome, preventing FtsZ polymerization at these regions. The sequence is that of Nucleoid occlusion factor SlmA from Shewanella amazonensis (strain ATCC BAA-1098 / SB2B).